A 551-amino-acid polypeptide reads, in one-letter code: Membrane protein insertase YidC (551 aa).

A helical transmembrane segment spans residues 3–23 (ANHIRILLLVTIAIMFISLMG). The span at 33–47 (NTKQQTSATQNNSHY) shows a compositional bias: polar residues. The tract at residues 33–58 (NTKQQTSATQNNSHYDNADSSTNTDV) is disordered. 3 consecutive transmembrane segments (helical) span residues 361-381 (LVGNWGLAIILVTCLIKLIFY), 431-451 (LSGCLPMLIQIPIFISLYWVL), and 504-524 (VMMFLPVIFTFLFASFPSGLV).

Belongs to the OXA1/ALB3/YidC family. Type 1 subfamily. Interacts with the Sec translocase complex via SecD. Specifically interacts with transmembrane segments of nascent integral membrane proteins during membrane integration.

The protein resides in the cell inner membrane. Functionally, required for the insertion and/or proper folding and/or complex formation of integral membrane proteins into the membrane. Involved in integration of membrane proteins that insert both dependently and independently of the Sec translocase complex, as well as at least some lipoproteins. Aids folding of multispanning membrane proteins. In Francisella tularensis subsp. novicida (strain U112), this protein is Membrane protein insertase YidC.